We begin with the raw amino-acid sequence, 268 residues long: Cytochrome b-c1 complex subunit Rieske-3, mitochondrial (268 aa).

Residues 1-56 (MLRIAGRKLSSSAATRSSSAFFTRNPFTFTDDSSSPARSPSPASLASQFLDQFRGF) constitute a mitochondrion transit peptide. The Mitochondrial matrix segment spans residues 57–105 (SSNSVSPAHQTGLVSDLPATVAAIKNPSSKIVYDDSNHERYPPGDPSKR). The helical transmembrane segment at 106–128 (AFAYFVLTGGRFVYASLVRLLIL) threads the bilayer. Topologically, residues 129-268 (KFVLSMSASK…FMEENKLLIG (140 aa)) are mitochondrial intermembrane. Residues 178–266 (INLANSVDLG…YSFMEENKLL (89 aa)) enclose the Rieske domain. Residues Cys211, His213, Cys230, and His233 each coordinate [2Fe-2S] cluster. Cysteines 216 and 232 form a disulfide.

This sequence belongs to the Rieske iron-sulfur protein family. Component of the ubiquinol-cytochrome c oxidoreductase (cytochrome b-c1 complex, complex III, CIII), a multisubunit enzyme composed of 3 respiratory subunits cytochrome b, cytochrome c1 and Rieske protein, 2 core protein subunits, and several low-molecular weight protein subunits. The complex exists as an obligatory dimer and forms supercomplexes (SCs) in the inner mitochondrial membrane with cytochrome c oxidase (complex IV, CIV). [2Fe-2S] cluster is required as a cofactor. High levels are seen in the flowers while a low level expression is seen in the roots, leaves and stems.

The protein resides in the mitochondrion inner membrane. It carries out the reaction a quinol + 2 Fe(III)-[cytochrome c](out) = a quinone + 2 Fe(II)-[cytochrome c](out) + 2 H(+)(out). Functionally, component of the ubiquinol-cytochrome c oxidoreductase, a multisubunit transmembrane complex that is part of the mitochondrial electron transport chain which drives oxidative phosphorylation. The respiratory chain contains 3 multisubunit complexes succinate dehydrogenase (complex II, CII), ubiquinol-cytochrome c oxidoreductase (cytochrome b-c1 complex, complex III, CIII) and cytochrome c oxidase (complex IV, CIV), that cooperate to transfer electrons derived from NADH and succinate to molecular oxygen, creating an electrochemical gradient over the inner membrane that drives transmembrane transport and the ATP synthase. The cytochrome b-c1 complex catalyzes electron transfer from ubiquinol to cytochrome c, linking this redox reaction to translocation of protons across the mitochondrial inner membrane, with protons being carried across the membrane as hydrogens on the quinol. In the process called Q cycle, 2 protons are consumed from the matrix, 4 protons are released into the intermembrane space and 2 electrons are passed to cytochrome c. The Rieske protein is a catalytic core subunit containing a [2Fe-2S] iron-sulfur cluster. It cycles between 2 conformational states during catalysis to transfer electrons from the quinol bound in the Q(0) site in cytochrome b to cytochrome c1. This chain is Cytochrome b-c1 complex subunit Rieske-3, mitochondrial, found in Nicotiana tabacum (Common tobacco).